The chain runs to 481 residues: Ribosomal protein uS12 methylthiotransferase RimO (481 aa).

Positions 8–124 constitute an MTTase N-terminal domain; sequence MTVHLVSMGC…IAGRLRTILD (117 aa). Cysteine 17, cysteine 53, and cysteine 87 together coordinate [4Fe-4S] cluster. The tract at residues 148-188 is disordered; that stretch reads PTARAEVSVPGHGTAPDLSASVTPDSGPRATRRRLGTGPSA. One can recognise a Radical SAM core domain in the interval 182–413; that stretch reads LGTGPSAPLK…DLTDELVSQR (232 aa). Cysteine 196, cysteine 200, and cysteine 203 together coordinate [4Fe-4S] cluster. Residues 415–480 form the TRAM domain; sequence EDRIGTRGRV…GVDLVARPAN (66 aa).

It belongs to the methylthiotransferase family. RimO subfamily. [4Fe-4S] cluster serves as cofactor.

The protein resides in the cytoplasm. The catalysed reaction is L-aspartate(89)-[ribosomal protein uS12]-hydrogen + (sulfur carrier)-SH + AH2 + 2 S-adenosyl-L-methionine = 3-methylsulfanyl-L-aspartate(89)-[ribosomal protein uS12]-hydrogen + (sulfur carrier)-H + 5'-deoxyadenosine + L-methionine + A + S-adenosyl-L-homocysteine + 2 H(+). Catalyzes the methylthiolation of an aspartic acid residue of ribosomal protein uS12. The sequence is that of Ribosomal protein uS12 methylthiotransferase RimO from Cutibacterium acnes (strain DSM 16379 / KPA171202) (Propionibacterium acnes).